A 455-amino-acid chain; its full sequence is MSIPGLGLIPEKPATSASRTYTLEPRQEYRFSVSHGASITITLTRGTAERDGTELALNVAYTLSGVKSKILSWHGANLSIEGITDHESVAGPDDAANTAHLNLHAFLQRSREAAARNNGGGRSAPHGPRVLVAGKTGCGRTSLVRTLAAWATRTGAQPMVVDADPGEGLLTLPGTLSAAVFGTVMDVASEGGWGAAPSSGPSAVPVKLPLVFYYGRRRVEEDRDLYKGVVNSISSAISARAADDPAVRSAGMLIDTPPYVEGKGADVLIHIAEELNVNIIVTIDTPSLHTELTQRFSGVKNVLGEHVSVVALDKSSGVMERDEGFLQHMGEASIKEYFFGDAKITLSPFTQQVAFDELAIYTSPEASDYSAEPGALERIPQPLPEMAHWVLAMMDAAPNDPPHKIRYAPVSGFVYVAAVDKERRRMKILAPVSGRLGDKPLVWGKWPEPHINLLG.

The ATP site is built by Glu28 and Lys67. The segment at 112–131 (EAAARNNGGGRSAPHGPRVL) is disordered. 137-142 (GCGRTS) is a binding site for ATP.

Belongs to the Clp1 family. Clp1 subfamily. As to quaternary structure, component of a pre-mRNA cleavage factor complex. Interacts directly with PCF11.

The protein localises to the nucleus. Functionally, required for endonucleolytic cleavage during polyadenylation-dependent pre-mRNA 3'-end formation. The sequence is that of mRNA cleavage and polyadenylation factor CLP1 from Pyricularia oryzae (strain 70-15 / ATCC MYA-4617 / FGSC 8958) (Rice blast fungus).